A 481-amino-acid polypeptide reads, in one-letter code: Protein hedgehog (481 aa).

Residue Cys93 is the site of N-palmitoyl cysteine attachment. Glu157, Glu158, Asp163, Thr193, Glu194, Asp197, and Asp199 together coordinate Ca(2+). Gly265 is lipidated: Cholesterol glycine ester.

It belongs to the hedgehog family. Interacts with shf. Post-translationally, the C-terminal part of the hedgehog protein precursor displays an autoproteolysis activity that results in the cleavage of the full-length protein into two parts (N-product and C-product). In addition, the C-terminal part displays a cholesterol transferase activity that results by the covalent attachment of a cholesterol moiety to the C-terminal of the newly generated N-product. The N-product is the active species in both local and long-range signaling, whereas the C-product has no signaling activity. In terms of processing, cholesterylation is required for N-product targeting to lipid rafts and multimerization. N-palmitoylation by Rasp of the hedgehog N-product, within the secretory pathway, is required for the embryonic and larval patterning activities of the hedgehog signal.

Its subcellular location is the nucleus. The protein localises to the cytoplasm. It localises to the cell membrane. It catalyses the reaction glycyl-L-cysteinyl-[protein] + cholesterol + H(+) = [protein]-C-terminal glycyl cholesterol ester + N-terminal L-cysteinyl-[protein]. Functionally, the C-terminal part of the hedgehog protein precursor displays an autoproteolysis activity that results in the cleavage of the full-length protein into two parts (N-product and C-product). In addition, the C-terminal part displays a cholesterol transferase activity that results by the covalent attachment of a cholesterol moiety to the C-terminal of the newly generated N-product. Once cleaved, the C-product has no signaling activity and diffuses from the cell. In terms of biological role, the dually lipidated hedgehog protein N-product is a morphogen which is essential for a variety of patterning events during development. Establishes the anterior-posterior axis of the embryonic segments and patterns the larval imaginal disks. Binds to the patched (ptc) receptor, which functions in association with smoothened (smo), to activate the transcription of target genes wingless (wg), decapentaplegic (dpp) and ptc. In the absence of hh, ptc represses the constitutive signaling activity of smo through fused (fu). Essential component of a signaling pathway which regulates the Duox-dependent gut immune response to bacterial uracil; required to activate Cad99C-dependent endosome formation, norpA-dependent Ca2+ mobilization and p38 MAPK, which are essential steps in the Duox-dependent production of reactive oxygen species (ROS) in response to intestinal bacterial infection. During photoreceptor differentiation, it up-regulates transcription of Ubr3, which in turn promotes the hh-signaling pathway by mediating the ubiquitination and degradation of cos. This is Protein hedgehog (hh-1) from Drosophila pseudoobscura pseudoobscura (Fruit fly).